We begin with the raw amino-acid sequence, 851 residues long: Glycogen phosphorylase, liver form (851 aa).

Position 2 is an N-acetylalanine (alanine 2). Position 15 is a phosphoserine; by PHK; in form phosphorylase a (serine 15). Residues 43–45 (DRN), tyrosine 76, and arginine 310 each bind AMP. Position 364 is an N6-succinyllysine (lysine 364). Lysine 470 is modified (N6-acetyllysine). A phosphoserine mark is found at serine 524, serine 561, and serine 639. Lysine 681 bears the N6-(pyridoxal phosphate)lysine mark. N6-acetyllysine is present on lysine 796.

It belongs to the glycogen phosphorylase family. Homodimer; enzymatically active. Interacts with PPP1R3B; recruits the phosphatase PP1 which dephosphorylates and inactivates PYGL/glycogen phosphorylase. Pyridoxal 5'-phosphate is required as a cofactor. Post-translationally, acetylation, which is up-regulated by glucose and insulin and down-regulated by glucagon, inhibits the glycogen phosphorylase activity by promoting PPP1R3B-mediated recruitment of phosphatase PP1 and Ser-15 dephosphorylation. In terms of processing, phosphorylation at Ser-15 converts inactive phosphorylase b into active phosphorylase a. Dephosphorylation of Ser-15 by phosphatase PP1 inactivates the enzyme.

The protein localises to the cytoplasm. It localises to the cytosol. The enzyme catalyses [(1-&gt;4)-alpha-D-glucosyl](n) + phosphate = [(1-&gt;4)-alpha-D-glucosyl](n-1) + alpha-D-glucose 1-phosphate. Its activity is regulated as follows. Allosterically regulated through the non-covalent binding of metabolites, being activated by AMP and inhibited by ATP, ADP, and glucose-6-phosphate. The activity is also controlled by post-translational modifications including phosphorylation and acetylation. Allosteric enzyme that catalyzes the rate-limiting step in glycogen catabolism, the phosphorolytic cleavage of glycogen to produce glucose-1-phosphate, and plays a central role in maintaining cellular and organismal glucose homeostasis. This Ovis aries (Sheep) protein is Glycogen phosphorylase, liver form.